The sequence spans 374 residues: Peptide chain release factor 2 (374 aa).

The residue at position 252 (Gln252) is an N5-methylglutamine.

It belongs to the prokaryotic/mitochondrial release factor family. Post-translationally, methylated by PrmC. Methylation increases the termination efficiency of RF2.

The protein localises to the cytoplasm. Peptide chain release factor 2 directs the termination of translation in response to the peptide chain termination codons UGA and UAA. The chain is Peptide chain release factor 2 from Stenotrophomonas maltophilia (strain R551-3).